Here is a 151-residue protein sequence, read N- to C-terminus: FAD synthase (151 aa).

ATP-binding positions include 12–13 (TF), 17–20 (HPGH), Asp97, and Tyr125.

This sequence belongs to the archaeal FAD synthase family. As to quaternary structure, homodimer. The cofactor is a divalent metal cation.

The enzyme catalyses FMN + ATP + H(+) = FAD + diphosphate. The protein operates within cofactor biosynthesis; FAD biosynthesis; FAD from FMN: step 1/1. Functionally, catalyzes the transfer of the AMP portion of ATP to flavin mononucleotide (FMN) to produce flavin adenine dinucleotide (FAD) coenzyme. The polypeptide is FAD synthase (Methanococcus vannielii (strain ATCC 35089 / DSM 1224 / JCM 13029 / OCM 148 / SB)).